The chain runs to 221 residues: Eukaryotic translation initiation factor 3 subunit K (221 aa).

A PCI domain is found at 46–215; sequence YDLEANLACL…EKIEFDNLAP (170 aa).

This sequence belongs to the eIF-3 subunit K family. As to quaternary structure, component of the eukaryotic translation initiation factor 3 (eIF-3) complex.

It is found in the cytoplasm. Functionally, component of the eukaryotic translation initiation factor 3 (eIF-3) complex, which is involved in protein synthesis of a specialized repertoire of mRNAs and, together with other initiation factors, stimulates binding of mRNA and methionyl-tRNAi to the 40S ribosome. The eIF-3 complex specifically targets and initiates translation of a subset of mRNAs involved in cell proliferation. This chain is Eukaryotic translation initiation factor 3 subunit K, found in Anopheles gambiae (African malaria mosquito).